The primary structure comprises 89 residues: U1-hexatoxin-Iw1e (89 aa).

A signal peptide spans 1 to 18 (MLKFVVLIFVVIMASTFA). 5 cysteine pairs are disulfide-bonded: Cys-21–Cys-32, Cys-26–Cys-40, Cys-31–Cys-66, Cys-50–Cys-74, and Cys-68–Cys-81. A propeptide spanning residues 87–89 (RSE) is cleaved from the precursor.

This sequence belongs to the MIT-like AcTx family. As to expression, expressed by the venom gland.

It localises to the secreted. In Illawarra wisharti (Illawarra funnel-web spider), this protein is U1-hexatoxin-Iw1e.